Reading from the N-terminus, the 479-residue chain is Zinc metalloproteinase/disintegrin (479 aa).

An N-terminal signal peptide occupies residues Met1 to Ser20. The propeptide occupies Ile21–Val187. One can recognise a Peptidase M12B domain in the interval Arg193–Pro390. Ca(2+) contacts are provided by Glu196 and Asp280. Disulfide bonds link Cys304-Cys385, Cys344-Cys369, and Cys346-Cys352. Position 329 (His329) interacts with Zn(2+). The active site involves Glu330. 2 residues coordinate Zn(2+): His333 and His339. Ca(2+) contacts are provided by Cys385 and Asn388. A propeptide spanning residues Pro390–Arg414 is cleaved from the precursor. The region spanning Thr398–Ala479 is the Disintegrin domain. Cystine bridges form between Cys435/Cys441, Cys440/Cys465, and Cys453/Cys472. The Cell attachment site motif lies at Arg457–Asp459.

It belongs to the venom metalloproteinase (M12B) family. P-II subfamily. P-IIa sub-subfamily. Monomer. The cofactor is Zn(2+). As to expression, expressed by the venom gland.

The protein resides in the secreted. Snake venom metalloproteinase that impairs hemostasis in the envenomed animal. Functionally, inhibits platelet aggregation induced by ADP, thrombin, platelet-activating factor and collagen. Acts by inhibiting fibrinogen interaction with platelet receptors GPIIb/GPIIIa (ITGA2B/ITGB3). The sequence is that of Zinc metalloproteinase/disintegrin from Deinagkistrodon acutus (Hundred-pace snake).